The primary structure comprises 397 residues: Elongation factor Tu (397 aa).

The tr-type G domain occupies 10 to 206; it reads KPHVNIGTIG…AVDTAIPEPE (197 aa). Positions 19–26 are G1; the sequence is GHIDHGKT. 19 to 26 serves as a coordination point for GTP; sequence GHIDHGKT. Position 26 (Thr-26) interacts with Mg(2+). The G2 stretch occupies residues 62-66; it reads GITIS. Residues 83–86 are G3; sequence DCPG. Residues 83–87 and 138–141 contribute to the GTP site; these read DCPGH and NKAD. The interval 138-141 is G4; that stretch reads NKAD. Residues 176 to 178 form a G5 region; that stretch reads SAL.

The protein belongs to the TRAFAC class translation factor GTPase superfamily. Classic translation factor GTPase family. EF-Tu/EF-1A subfamily. In terms of assembly, monomer.

It is found in the cytoplasm. It carries out the reaction GTP + H2O = GDP + phosphate + H(+). In terms of biological role, GTP hydrolase that promotes the GTP-dependent binding of aminoacyl-tRNA to the A-site of ribosomes during protein biosynthesis. In Kineococcus radiotolerans (strain ATCC BAA-149 / DSM 14245 / SRS30216), this protein is Elongation factor Tu.